We begin with the raw amino-acid sequence, 556 residues long: Arginine--tRNA ligase (556 aa).

The short motif at 132–142 (VNPTGDLHLGH) is the 'HIGH' region element.

The protein belongs to the class-I aminoacyl-tRNA synthetase family. Monomer.

It localises to the cytoplasm. It carries out the reaction tRNA(Arg) + L-arginine + ATP = L-arginyl-tRNA(Arg) + AMP + diphosphate. This Oceanobacillus iheyensis (strain DSM 14371 / CIP 107618 / JCM 11309 / KCTC 3954 / HTE831) protein is Arginine--tRNA ligase.